The primary structure comprises 134 residues: Large ribosomal subunit protein bL20 (134 aa).

The protein belongs to the bacterial ribosomal protein bL20 family.

Binds directly to 23S ribosomal RNA and is necessary for the in vitro assembly process of the 50S ribosomal subunit. It is not involved in the protein synthesizing functions of that subunit. This Rhizobium etli (strain ATCC 51251 / DSM 11541 / JCM 21823 / NBRC 15573 / CFN 42) protein is Large ribosomal subunit protein bL20.